The following is a 283-amino-acid chain: MITTQSISDIRAQVKAWRQKGETVAFVPTMGNLHLGHITLVKEAKTRADHVVASIFVNPMQFGQNEDLDAYPRTLAEDQAALTAAGAELLFTPTPEIIYPKGMDAQTYVEVPSISDLLCGASRPGHFRGVATVVCKLFNIVQPDIAVFGQKDFQQLLVIRTMVDDLSMPIEIVGVDTIREASGLAMSSRNGYLSAEQKDQASQIKRSLDKMAESLKAGLAFKDIITQAQTELAEAGFRNDYLEIRNANNFAIADAGDVKLVILVAAYMGSTRLIDNQVVTLNA.

Residue 30–37 (MGNLHLGH) coordinates ATP. Catalysis depends on His37, which acts as the Proton donor. Gln61 is a binding site for (R)-pantoate. Gln61 serves as a coordination point for beta-alanine. 149 to 152 (GQKD) is a binding site for ATP. A (R)-pantoate-binding site is contributed by Gln155. ATP contacts are provided by residues Ile178 and 186-189 (MSSR).

It belongs to the pantothenate synthetase family. In terms of assembly, homodimer.

The protein localises to the cytoplasm. The enzyme catalyses (R)-pantoate + beta-alanine + ATP = (R)-pantothenate + AMP + diphosphate + H(+). The protein operates within cofactor biosynthesis; (R)-pantothenate biosynthesis; (R)-pantothenate from (R)-pantoate and beta-alanine: step 1/1. In terms of biological role, catalyzes the condensation of pantoate with beta-alanine in an ATP-dependent reaction via a pantoyl-adenylate intermediate. The chain is Pantothenate synthetase from Shewanella halifaxensis (strain HAW-EB4).